The primary structure comprises 86 residues: uncharacterized protein (86 aa).

This is an uncharacterized protein from Vaccinia virus (strain Copenhagen) (VACV).